We begin with the raw amino-acid sequence, 341 residues long: RNA 3'-terminal phosphate cyclase (341 aa).

ATP is bound by residues Gln100 and 283–287 (FLGDQ). The active-site Tele-AMP-histidine intermediate is the His307.

Belongs to the RNA 3'-terminal cyclase family. Type 1 subfamily.

The protein resides in the cytoplasm. It catalyses the reaction a 3'-end 3'-phospho-ribonucleotide-RNA + ATP = a 3'-end 2',3'-cyclophospho-ribonucleotide-RNA + AMP + diphosphate. Its function is as follows. Catalyzes the conversion of 3'-phosphate to a 2',3'-cyclic phosphodiester at the end of RNA. The mechanism of action of the enzyme occurs in 3 steps: (A) adenylation of the enzyme by ATP; (B) transfer of adenylate to an RNA-N3'P to produce RNA-N3'PP5'A; (C) and attack of the adjacent 2'-hydroxyl on the 3'-phosphorus in the diester linkage to produce the cyclic end product. The biological role of this enzyme is unknown but it is likely to function in some aspects of cellular RNA processing. The sequence is that of RNA 3'-terminal phosphate cyclase (rtcA) from Pyrococcus horikoshii (strain ATCC 700860 / DSM 12428 / JCM 9974 / NBRC 100139 / OT-3).